The following is a 115-amino-acid chain: Large ribosomal subunit protein bL20 (115 aa).

The protein belongs to the bacterial ribosomal protein bL20 family.

Functionally, binds directly to 23S ribosomal RNA and is necessary for the in vitro assembly process of the 50S ribosomal subunit. It is not involved in the protein synthesizing functions of that subunit. This chain is Large ribosomal subunit protein bL20 (rplT), found in Borreliella burgdorferi (strain ATCC 35210 / DSM 4680 / CIP 102532 / B31) (Borrelia burgdorferi).